The primary structure comprises 682 residues: Methionine--tRNA ligase (682 aa).

Residues 15–25 (PYANGAIHLGH) carry the 'HIGH' region motif. Residues cysteine 146, cysteine 149, cysteine 159, and cysteine 162 each coordinate Zn(2+). The short motif at 331–335 (KMSKS) is the 'KMSKS' region element. Lysine 334 serves as a coordination point for ATP. The region spanning 580-682 (DFAKLDMRVA…SGVTAGMQVK (103 aa)) is the tRNA-binding domain.

The protein belongs to the class-I aminoacyl-tRNA synthetase family. MetG type 1 subfamily. As to quaternary structure, homodimer. Zn(2+) serves as cofactor.

It localises to the cytoplasm. It carries out the reaction tRNA(Met) + L-methionine + ATP = L-methionyl-tRNA(Met) + AMP + diphosphate. Its function is as follows. Is required not only for elongation of protein synthesis but also for the initiation of all mRNA translation through initiator tRNA(fMet) aminoacylation. This Haemophilus influenzae (strain PittEE) protein is Methionine--tRNA ligase.